The primary structure comprises 185 residues: ATP synthase subunit b, chloroplastic (185 aa).

A helical membrane pass occupies residues 31–53; that stretch reads IINITVVLGILIYFGKGVLSNLL.

Belongs to the ATPase B chain family. As to quaternary structure, F-type ATPases have 2 components, F(1) - the catalytic core - and F(0) - the membrane proton channel. F(1) has five subunits: alpha(3), beta(3), gamma(1), delta(1), epsilon(1). F(0) has four main subunits: a(1), b(1), b'(1) and c(10-14). The alpha and beta chains form an alternating ring which encloses part of the gamma chain. F(1) is attached to F(0) by a central stalk formed by the gamma and epsilon chains, while a peripheral stalk is formed by the delta, b and b' chains.

It localises to the plastid. The protein localises to the chloroplast thylakoid membrane. Its function is as follows. F(1)F(0) ATP synthase produces ATP from ADP in the presence of a proton or sodium gradient. F-type ATPases consist of two structural domains, F(1) containing the extramembraneous catalytic core and F(0) containing the membrane proton channel, linked together by a central stalk and a peripheral stalk. During catalysis, ATP synthesis in the catalytic domain of F(1) is coupled via a rotary mechanism of the central stalk subunits to proton translocation. In terms of biological role, component of the F(0) channel, it forms part of the peripheral stalk, linking F(1) to F(0). The protein is ATP synthase subunit b, chloroplastic of Gnetum parvifolium (Small-leaved jointfir).